A 116-amino-acid chain; its full sequence is Spermadhesin Z13 (116 aa).

2 disulfide bridges follow: C14/C35 and C58/C79. Residues 14–115 (CGDLYGEEYG…PDFFLIFRRV (102 aa)) enclose the CUB domain.

Belongs to the spermadhesin family. Homodimer; disulfide-linked. As to expression, seminal plasma.

It localises to the secreted. Functionally, may be involved in the fertilization process. In Bos taurus (Bovine), this protein is Spermadhesin Z13.